The following is a 274-amino-acid chain: Caldesmon, smooth muscle (274 aa).

Disordered regions lie at residues 1–102 (SNLK…FSPK) and 179–274 (KGNV…EKEP). Basic and acidic residues-rich tracts occupy residues 12–21 (GSEKLKEKQQ) and 28–95 (DELK…EKKP). The segment covering 182–194 (VFSSPGGTGTPNK) has biased composition (polar residues). Basic and acidic residues-rich tracts occupy residues 226–245 (SDLR…KQSV) and 260–274 (KKSE…EKEP).

Its subcellular location is the cytoplasm. It is found in the cytoskeleton. The protein resides in the myofibril. It localises to the stress fiber. Functionally, control of actomyosin interactions in smooth muscle and nonmuscle cells (could act as a bridge between myosin and actin filaments). Inhibits the actin-activated ATPase of myosin this inhibition is attenuated by calcium-calmodulin and is potentiated by tropomyosin. Interacts with actin, myosin, 2 molecules of tropomyosin and with calmodulin. The polypeptide is Caldesmon, smooth muscle (CALD1) (Meleagris gallopavo (Wild turkey)).